A 298-amino-acid chain; its full sequence is Inosose dehydratase (298 aa).

It belongs to the IolE/MocC family. It depends on glutathione as a cofactor. Requires Co(2+) as cofactor. Mn(2+) is required as a cofactor.

It catalyses the reaction scyllo-inosose = 3D-3,5/4-trihydroxycyclohexane-1,2-dione + H2O. It participates in polyol metabolism; myo-inositol degradation into acetyl-CoA; acetyl-CoA from myo-inositol: step 2/7. Its function is as follows. Catalyzes the dehydration of inosose (2-keto-myo-inositol, 2KMI or 2,4,6/3,5-pentahydroxycyclohexanone) to 3D-(3,5/4)-trihydroxycyclohexane-1,2-dione (D-2,3-diketo-4-deoxy-epi-inositol). The chain is Inosose dehydratase from Bacillus cereus (strain AH820).